A 1078-amino-acid chain; its full sequence is Phosphatidylinositol-3,5-bisphosphate 3-phosphatase MTMR4 (1078 aa).

The Myotubularin phosphatase domain maps to 154–571 (DHVKSRFQIE…RALQLWTAVY (418 aa)). Positions 267-290 (RMPNGNPSNKGNNDGSDNSDTDFD) are disordered. The span at 270-282 (NGNPSNKGNNDGS) shows a compositional bias: low complexity. Asn-321, Asn-346, and Ile-347 together coordinate a 1,2-diacyl-sn-glycero-3-phospho-(1D-myo-inositol-3,5-bisphosphate). Positions 321, 346, and 347 each coordinate a 1,2-diacyl-sn-glycero-3-phospho-(1D-myo-inositol-3-phosphate). The Phosphocysteine intermediate role is filled by Cys-408. Residues Ser-409, Asp-410, Gly-411, Trp-412, Asp-413, Arg-414, Lys-450, and Arg-454 each contribute to the a 1,2-diacyl-sn-glycero-3-phospho-(1D-myo-inositol-3,5-bisphosphate) site. Residues Ser-409, Asp-410, Gly-411, Trp-412, Asp-413, and Arg-414 each coordinate a 1,2-diacyl-sn-glycero-3-phospho-(1D-myo-inositol-3-phosphate). Arg-454 contributes to the a 1,2-diacyl-sn-glycero-3-phospho-(1D-myo-inositol-3-phosphate) binding site. A compositionally biased stretch (polar residues) spans 629-648 (SSDPNLNNHQGNLESCSSSK). The segment at 629–694 (SSDPNLNNHQ…SGSATNQNNN (66 aa)) is disordered. Residues 904–935 (VQQRLRQMEASYKQEVDLLRRQVWELQLQLEI) are a coiled coil. The disordered stretch occupies residues 960–982 (DGSDMDDLYSDKSEDRLSEASWE). Residues 968–982 (YSDKSEDRLSEASWE) are compositionally biased toward basic and acidic residues. The FYVE-type zinc finger occupies 997–1057 (DHMASHCFNC…VCNTCYDHIQ (61 aa)). 8 residues coordinate Zn(2+): Cys-1003, Cys-1006, Cys-1019, Cys-1022, Cys-1027, Cys-1030, Cys-1049, and Cys-1052.

This sequence belongs to the protein-tyrosine phosphatase family. Non-receptor class myotubularin subfamily. Homooligomeric.

Its subcellular location is the early endosome membrane. It is found in the recycling endosome membrane. It localises to the late endosome membrane. The protein resides in the cytoplasmic vesicle. The protein localises to the phagosome membrane. The enzyme catalyses a 1,2-diacyl-sn-glycero-3-phospho-(1D-myo-inositol-3-phosphate) + H2O = a 1,2-diacyl-sn-glycero-3-phospho-(1D-myo-inositol) + phosphate. It carries out the reaction a 1,2-diacyl-sn-glycero-3-phospho-(1D-myo-inositol-3,5-bisphosphate) + H2O = a 1,2-diacyl-sn-glycero-3-phospho-(1D-myo-inositol-5-phosphate) + phosphate. The catalysed reaction is 1,2-dioctanoyl-sn-glycero-3-phospho-(1-D-myo-inositol-3-phosphate) + H2O = 1,2-dioctanoyl-sn-glycero-3-phospho-(1D-myo-inositol) + phosphate. It catalyses the reaction 1,2-dioctanoyl-sn-glycero-3-phospho-(1D-myo-inositol-3,5-bisphosphate) + H2O = 1,2-dioctanoyl-sn-glycero-3-phospho-(1D-myo-inositol-5-phosphate) + phosphate. Functionally, lipid phosphatase that specifically dephosphorylates the D-3 position of phosphatidylinositol 3-phosphate and phosphatidylinositol 3,5-bisphosphate, generating phosphatidylinositol and phosphatidylinositol 5-phosphate. Decreases the levels of phosphatidylinositol 3-phosphate, a phospholipid found in cell membranes where it acts as key regulator of both cell signaling and intracellular membrane traffic, in a subset of endosomal membranes to negatively regulate both endocytic recycling and trafficking and/or maturation of endosomes toward lysosomes. Through phosphatidylinositol 3-phosphate turnover in phagosome membranes regulates phagocytosis and phagosome maturation. By decreasing phosphatidylinositol 3-monophosphate (PI3P) levels in immune cells it can also regulate the innate immune response. Beside its lipid phosphatase activity, can also function as a molecular adapter to regulate midbody abscission during mitotic cytokinesis. Can also negatively regulate TGF-beta and BMP signaling through Smad proteins dephosphorylation and retention in endosomes. The protein is Phosphatidylinositol-3,5-bisphosphate 3-phosphatase MTMR4 (mtmr4) of Xenopus laevis (African clawed frog).